The chain runs to 444 residues: Zinc finger CCCH domain-containing protein 63 (444 aa).

3 C3H1-type zinc fingers span residues 56-84 (RIGE…HPAD), 101-129 (RIGQ…HPRE), and 147-175 (RPNE…HPQP). Positions 251–276 (GSSSSDDQQRTAGGAQYYTGSRHSET) are disordered. 2 consecutive C3H1-type zinc fingers follow at residues 309 to 337 (RPDQ…HPKE) and 355 to 383 (RPGE…HPMG). The segment at 405–444 (PVPAHSEVSPDNVSGRSRRITHSDSQQIPSGERGTEREAS) is disordered.

The protein is Zinc finger CCCH domain-containing protein 63 of Oryza sativa subsp. japonica (Rice).